We begin with the raw amino-acid sequence, 103 residues long: MYAVIKTGGKQYTVKEGDVLKIEMLPENVGNEIKFSEVLMLVDGDKVTCGTPFVAKATVKAEVLDHGRHKKVKIIKFRRRKHHMKQMGHRQYYSQVKITAIGK.

It belongs to the bacterial ribosomal protein bL21 family. Part of the 50S ribosomal subunit. Contacts protein L20.

In terms of biological role, this protein binds to 23S rRNA in the presence of protein L20. This is Large ribosomal subunit protein bL21 from Legionella pneumophila (strain Paris).